Consider the following 273-residue polypeptide: Protein BRANCHLESS TRICHOME (273 aa).

A compositionally biased stretch (polar residues) spans 1-12 (MKDMKMQSSPET). The tract at residues 1-30 (MKDMKMQSSPETMMTRIPTPDPHSTGVRED) is disordered. A coiled-coil region spans residues 69 to 199 (IKVFMESELG…GERERNRMMK (131 aa)).

Interacts with STI.

Functionally, acts as a key regulator of trichome branching. Could participate with STI in the same pathway. Also plays a role in integrating endoreplication levels with cell shape. The sequence is that of Protein BRANCHLESS TRICHOME (BLT) from Arabidopsis thaliana (Mouse-ear cress).